We begin with the raw amino-acid sequence, 293 residues long: 33 kDa chaperonin (293 aa).

Cystine bridges form between Cys-236–Cys-238 and Cys-269–Cys-272.

It belongs to the HSP33 family. In terms of processing, under oxidizing conditions two disulfide bonds are formed involving the reactive cysteines. Under reducing conditions zinc is bound to the reactive cysteines and the protein is inactive.

The protein localises to the cytoplasm. In terms of biological role, redox regulated molecular chaperone. Protects both thermally unfolding and oxidatively damaged proteins from irreversible aggregation. Plays an important role in the bacterial defense system toward oxidative stress. In Lactobacillus delbrueckii subsp. bulgaricus (strain ATCC 11842 / DSM 20081 / BCRC 10696 / JCM 1002 / NBRC 13953 / NCIMB 11778 / NCTC 12712 / WDCM 00102 / Lb 14), this protein is 33 kDa chaperonin.